The chain runs to 166 residues: Putative 4-hydroxy-4-methyl-2-oxoglutarate aldolase 1 (166 aa).

Ala2 is subject to N-acetylalanine. Substrate is bound by residues 81–84 (GGNP) and Arg103. Position 104 (Asp104) interacts with a divalent metal cation.

It belongs to the class II aldolase/RraA-like family. As to quaternary structure, homotrimer. It depends on a divalent metal cation as a cofactor.

The enzyme catalyses 4-hydroxy-4-methyl-2-oxoglutarate = 2 pyruvate. The catalysed reaction is oxaloacetate + H(+) = pyruvate + CO2. Catalyzes the aldol cleavage of 4-hydroxy-4-methyl-2-oxoglutarate (HMG) into 2 molecules of pyruvate. Also contains a secondary oxaloacetate (OAA) decarboxylase activity due to the common pyruvate enolate transition state formed following C-C bond cleavage in the retro-aldol and decarboxylation reactions. This chain is Putative 4-hydroxy-4-methyl-2-oxoglutarate aldolase 1, found in Arabidopsis thaliana (Mouse-ear cress).